A 383-amino-acid polypeptide reads, in one-letter code: UDP-N-acetylenolpyruvoylglucosamine reductase (383 aa).

A compositionally biased stretch (basic and acidic residues) spans 1-13; that stretch reads MRTRRDVPADRSG. The tract at residues 1–26 is disordered; it reads MRTRRDVPADRSGRSRVSRHPGLSVP. Residues 49–215 form the FAD-binding PCMH-type domain; sequence LGGPATRLLT…LRVRFELENA (167 aa). Residue R192 is part of the active site. S271 serves as the catalytic Proton donor. E375 is a catalytic residue.

The protein belongs to the MurB family. Requires FAD as cofactor.

The protein resides in the cytoplasm. The enzyme catalyses UDP-N-acetyl-alpha-D-muramate + NADP(+) = UDP-N-acetyl-3-O-(1-carboxyvinyl)-alpha-D-glucosamine + NADPH + H(+). It participates in cell wall biogenesis; peptidoglycan biosynthesis. Cell wall formation. This chain is UDP-N-acetylenolpyruvoylglucosamine reductase, found in Streptomyces coelicolor (strain ATCC BAA-471 / A3(2) / M145).